The chain runs to 313 residues: Porphobilinogen deaminase (313 aa).

An S-(dipyrrolylmethanemethyl)cysteine modification is found at Cys242.

This sequence belongs to the HMBS family. As to quaternary structure, monomer. Dipyrromethane is required as a cofactor.

The enzyme catalyses 4 porphobilinogen + H2O = hydroxymethylbilane + 4 NH4(+). It participates in porphyrin-containing compound metabolism; protoporphyrin-IX biosynthesis; coproporphyrinogen-III from 5-aminolevulinate: step 2/4. Its function is as follows. Tetrapolymerization of the monopyrrole PBG into the hydroxymethylbilane pre-uroporphyrinogen in several discrete steps. This is Porphobilinogen deaminase from Escherichia fergusonii (strain ATCC 35469 / DSM 13698 / CCUG 18766 / IAM 14443 / JCM 21226 / LMG 7866 / NBRC 102419 / NCTC 12128 / CDC 0568-73).